Consider the following 327-residue polypeptide: Deoxyribonuclease (327 aa).

Residues 1–24 (MSKKLRNFLVRIIVAAFASFAVMA) constitute a signal peptide (or 35). Positions 299–327 (DSTTDEIENSVDDSEEIVYNDTTTEEEEN) are disordered.

It catalyses the reaction Endonucleolytic cleavage to 5'-phosphodinucleotide and 5'-phosphooligonucleotide end-products.. May have a role in S.equisimilis virulence. The polypeptide is Deoxyribonuclease (sdc) (Streptococcus dysgalactiae subsp. equisimilis (Streptococcus equisimilis)).